The primary structure comprises 317 residues: Ribosomal protein L11 methyltransferase (317 aa).

S-adenosyl-L-methionine contacts are provided by threonine 158, glycine 179, aspartate 201, and asparagine 244.

The protein belongs to the methyltransferase superfamily. PrmA family.

The protein resides in the cytoplasm. The catalysed reaction is L-lysyl-[protein] + 3 S-adenosyl-L-methionine = N(6),N(6),N(6)-trimethyl-L-lysyl-[protein] + 3 S-adenosyl-L-homocysteine + 3 H(+). Its function is as follows. Methylates ribosomal protein L11. The polypeptide is Ribosomal protein L11 methyltransferase (Streptococcus pyogenes serotype M28 (strain MGAS6180)).